A 100-amino-acid polypeptide reads, in one-letter code: NAD(P)H-quinone oxidoreductase subunit 4L, chloroplastic (100 aa).

3 helical membrane-spanning segments follow: residues 1–21, 31–51, and 60–80; these read MLEH…YGLI, ICLE…SDFF, and IFAI…LAIL.

It belongs to the complex I subunit 4L family. As to quaternary structure, NDH is composed of at least 16 different subunits, 5 of which are encoded in the nucleus.

The protein localises to the plastid. It is found in the chloroplast thylakoid membrane. It carries out the reaction a plastoquinone + NADH + (n+1) H(+)(in) = a plastoquinol + NAD(+) + n H(+)(out). It catalyses the reaction a plastoquinone + NADPH + (n+1) H(+)(in) = a plastoquinol + NADP(+) + n H(+)(out). NDH shuttles electrons from NAD(P)H:plastoquinone, via FMN and iron-sulfur (Fe-S) centers, to quinones in the photosynthetic chain and possibly in a chloroplast respiratory chain. The immediate electron acceptor for the enzyme in this species is believed to be plastoquinone. Couples the redox reaction to proton translocation, and thus conserves the redox energy in a proton gradient. The polypeptide is NAD(P)H-quinone oxidoreductase subunit 4L, chloroplastic (Trachelium caeruleum (Blue throatwort)).